The chain runs to 163 residues: Nucleotide-binding protein Clos_1967 (163 aa).

Belongs to the YajQ family.

In terms of biological role, nucleotide-binding protein. The sequence is that of Nucleotide-binding protein Clos_1967 from Alkaliphilus oremlandii (strain OhILAs) (Clostridium oremlandii (strain OhILAs)).